Reading from the N-terminus, the 115-residue chain is MARVKRGNVARKRRNKILRLARGFRGGNGTQFRTANQRVMKALCNAYRDRRRRKRDFRRLWIARINAAARINGVSYSRLMGGLKKADVRLNRKMLAQLAVVDPGSFSNVVATAKG.

Belongs to the bacterial ribosomal protein bL20 family.

Binds directly to 23S ribosomal RNA and is necessary for the in vitro assembly process of the 50S ribosomal subunit. It is not involved in the protein synthesizing functions of that subunit. The protein is Large ribosomal subunit protein bL20 of Parasynechococcus marenigrum (strain WH8102).